Consider the following 303-residue polypeptide: Phytochrome-associated serine/threonine-protein phosphatase (303 aa).

4 residues coordinate Zn(2+): Asp50, His52, Asp78, and Asn110. The Proton donor role is filled by His111. Zn(2+) contacts are provided by His160 and His234.

The protein belongs to the PPP phosphatase family. PP-6 (PP-V) subfamily. As to quaternary structure, interacts with PHYA and PHYB, mostly when they are phosphorylated and in Pfr forms. Zn(2+) serves as cofactor. As to expression, mostly expressed in flowers and stems.

The protein localises to the cytoplasm. The catalysed reaction is O-phospho-L-seryl-[protein] + H2O = L-seryl-[protein] + phosphate. It carries out the reaction O-phospho-L-threonyl-[protein] + H2O = L-threonyl-[protein] + phosphate. Catalytic subunit of protein phosphatase 6 (PP6). Dephosphorylates phosphorylated phytochromes, with a preference toward Pfr forms. Plays a major role in the photoperiodic control of flowering time in long days by modulating phytochrome signals in flowering time control. The sequence is that of Phytochrome-associated serine/threonine-protein phosphatase from Pisum sativum (Garden pea).